Reading from the N-terminus, the 861-residue chain is Leucine--tRNA ligase (861 aa).

The 'HIGH' region motif lies at 42–52; the sequence is PYPSGRLHMGH. A 'KMSKS' region motif is present at residues 619–623; the sequence is KMSKS. Lysine 622 is an ATP binding site.

The protein belongs to the class-I aminoacyl-tRNA synthetase family.

The protein localises to the cytoplasm. It catalyses the reaction tRNA(Leu) + L-leucine + ATP = L-leucyl-tRNA(Leu) + AMP + diphosphate. The sequence is that of Leucine--tRNA ligase from Haemophilus influenzae (strain PittEE).